The following is a 352-amino-acid chain: RNA 3'-terminal phosphate cyclase (352 aa).

ATP contacts are provided by residues Gln100 and 297-301 (HLADQ). His322 functions as the Tele-AMP-histidine intermediate in the catalytic mechanism.

This sequence belongs to the RNA 3'-terminal cyclase family. Type 1 subfamily.

Its subcellular location is the cytoplasm. It catalyses the reaction a 3'-end 3'-phospho-ribonucleotide-RNA + ATP = a 3'-end 2',3'-cyclophospho-ribonucleotide-RNA + AMP + diphosphate. Catalyzes the conversion of 3'-phosphate to a 2',3'-cyclic phosphodiester at the end of RNA. The mechanism of action of the enzyme occurs in 3 steps: (A) adenylation of the enzyme by ATP; (B) transfer of adenylate to an RNA-N3'P to produce RNA-N3'PP5'A; (C) and attack of the adjacent 2'-hydroxyl on the 3'-phosphorus in the diester linkage to produce the cyclic end product. The biological role of this enzyme is unknown but it is likely to function in some aspects of cellular RNA processing. The protein is RNA 3'-terminal phosphate cyclase of Methanosarcina mazei (strain ATCC BAA-159 / DSM 3647 / Goe1 / Go1 / JCM 11833 / OCM 88) (Methanosarcina frisia).